A 60-amino-acid polypeptide reads, in one-letter code: UPF0434 protein Ent638_1436 (60 aa).

It belongs to the UPF0434 family.

This is UPF0434 protein Ent638_1436 from Enterobacter sp. (strain 638).